The chain runs to 228 residues: MKISILSLFPELYETWINHSIISNAIKNNQVTIEIINFRLYTNDKHKKVDDYQYGGGAGMVLMIEPIVSAIRAIRTPNSYVILTTPKGQVFNQELANEFVSKYDHIIIIAGHYEGFDERINYYVDAQYSIGDFVLTGGELPSMVISDAVIRLLDGVISSSSLESESFNNYLLDYPVYTRPVVFEGHQVPDVLLSGHHKNIADFRKQQQEMITKKNRPDLYQKYLNSKK.

Residues Gly111 and 130-135 (IGDFVL) each bind S-adenosyl-L-methionine.

The protein belongs to the RNA methyltransferase TrmD family. In terms of assembly, homodimer.

It localises to the cytoplasm. The catalysed reaction is guanosine(37) in tRNA + S-adenosyl-L-methionine = N(1)-methylguanosine(37) in tRNA + S-adenosyl-L-homocysteine + H(+). Functionally, specifically methylates guanosine-37 in various tRNAs. In Ureaplasma urealyticum serovar 10 (strain ATCC 33699 / Western), this protein is tRNA (guanine-N(1)-)-methyltransferase.